Reading from the N-terminus, the 274-residue chain is Cytochrome c oxidase subunit 3 (274 aa).

The Mitochondrial matrix portion of the chain corresponds to 1-15 (MTHQTHAYHMVNPSP). Residues 16–34 (WPLTGALSALLMTSGLAMW) form a helical membrane-spanning segment. Residues 35–40 (FHFNSS) lie on the Mitochondrial intermembrane side of the membrane. A helical membrane pass occupies residues 41–66 (MLLSLGMLTNLLTMYQWWRDIVREGT). The Mitochondrial matrix portion of the chain corresponds to 67–72 (FQGHHT). A helical membrane pass occupies residues 73 to 105 (SIVQKGLRYGMVLFIISEIFFFAGFFWAFYHSS). The Mitochondrial intermembrane portion of the chain corresponds to 106–128 (LAPTPELGGCWPPTGIHPLNPLE). A helical membrane pass occupies residues 129–152 (VPLLNTAVLLASGVSITWAHHSLM). The Mitochondrial matrix portion of the chain corresponds to 153–155 (EGN). A helical membrane pass occupies residues 156-183 (RVQMLQALLITITLGLYFTLLQASEYFE). The Mitochondrial intermembrane portion of the chain corresponds to 184 to 190 (TSFTISD). A helical transmembrane segment spans residues 191-223 (GVYGSTFFMATGFHGLHVIIGSTFLTVCFFRQL). Topologically, residues 224–232 (SFHFTSNHH) are mitochondrial matrix. Residues 233–256 (FGFEAAAWYWHFVDVVWLFLYVSI) form a helical membrane-spanning segment. The Mitochondrial intermembrane portion of the chain corresponds to 257–274 (YWWGSYSFSIDPMQLTSN).

The protein belongs to the cytochrome c oxidase subunit 3 family. In terms of assembly, component of the cytochrome c oxidase (complex IV, CIV), a multisubunit enzyme composed of 14 subunits. The complex is composed of a catalytic core of 3 subunits MT-CO1, MT-CO2 and MT-CO3, encoded in the mitochondrial DNA, and 11 supernumerary subunits COX4I, COX5A, COX5B, COX6A, COX6B, COX6C, COX7A, COX7B, COX7C, COX8 and NDUFA4, which are encoded in the nuclear genome. The complex exists as a monomer or a dimer and forms supercomplexes (SCs) in the inner mitochondrial membrane with NADH-ubiquinone oxidoreductase (complex I, CI) and ubiquinol-cytochrome c oxidoreductase (cytochrome b-c1 complex, complex III, CIII), resulting in different assemblies (supercomplex SCI(1)III(2)IV(1) and megacomplex MCI(2)III(2)IV(2)).

It localises to the mitochondrion inner membrane. It carries out the reaction 4 Fe(II)-[cytochrome c] + O2 + 8 H(+)(in) = 4 Fe(III)-[cytochrome c] + 2 H2O + 4 H(+)(out). In terms of biological role, component of the cytochrome c oxidase, the last enzyme in the mitochondrial electron transport chain which drives oxidative phosphorylation. The respiratory chain contains 3 multisubunit complexes succinate dehydrogenase (complex II, CII), ubiquinol-cytochrome c oxidoreductase (cytochrome b-c1 complex, complex III, CIII) and cytochrome c oxidase (complex IV, CIV), that cooperate to transfer electrons derived from NADH and succinate to molecular oxygen, creating an electrochemical gradient over the inner membrane that drives transmembrane transport and the ATP synthase. Cytochrome c oxidase is the component of the respiratory chain that catalyzes the reduction of oxygen to water. Electrons originating from reduced cytochrome c in the intermembrane space (IMS) are transferred via the dinuclear copper A center (CU(A)) of subunit 2 and heme A of subunit 1 to the active site in subunit 1, a binuclear center (BNC) formed by heme A3 and copper B (CU(B)). The BNC reduces molecular oxygen to 2 water molecules using 4 electrons from cytochrome c in the IMS and 4 protons from the mitochondrial matrix. This Lemur catta (Ring-tailed lemur) protein is Cytochrome c oxidase subunit 3 (MT-CO3).